The following is a 158-amino-acid chain: Large ribosomal subunit protein uL15 (158 aa).

Over residues 1-13 (MKLNEIKDNEGST) the composition is skewed to basic and acidic residues. Positions 1-45 (MKLNEIKDNEGSTHSRKRLGRGIGSGSGKTGGRGVKGQKSRSGVA) are disordered. Residues 21 to 35 (RGIGSGSGKTGGRGV) show a composition bias toward gly residues.

This sequence belongs to the universal ribosomal protein uL15 family. Part of the 50S ribosomal subunit.

In terms of biological role, binds to the 23S rRNA. The polypeptide is Large ribosomal subunit protein uL15 (Rhizobium johnstonii (strain DSM 114642 / LMG 32736 / 3841) (Rhizobium leguminosarum bv. viciae)).